We begin with the raw amino-acid sequence, 614 residues long: Polyamine transporter 2 (614 aa).

The disordered stretch occupies residues 1–40; sequence MSDQESVVSFNSQNTSMVDVEGQQPQQYVPSKTNSRANQL. The Cytoplasmic portion of the chain corresponds to 1 to 173; sequence MSDQESVVSF…WPSWVRWSYT (173 aa). Phosphoserine is present on Ser-50. Over residues 99–122 the composition is skewed to polar residues; sequence RTASALSRTRTKQLNRTATNSSST. The segment at 99-144 is disordered; that stretch reads RTASALSRTRTKQLNRTATNSSSTGKEEMEEEETEEREDQSGENEL. A compositionally biased stretch (acidic residues) spans 126 to 144; that stretch reads EMEEEETEEREDQSGENEL. Residues 174–194 form a helical membrane-spanning segment; it reads VLLSILVICVAYGSACISGGL. Residues 195–206 lie on the Extracellular side of the membrane; the sequence is GTVEKKYHVGME. The helical transmembrane segment at 207–227 threads the bilayer; the sequence is AAILSCSLMVIGFSLGPLIWS. Residues 228–236 are Cytoplasmic-facing; sequence PVSDLYGRR. Residues 237 to 257 traverse the membrane as a helical segment; that stretch reads VAYFVSMGLYVIFNIPCALAP. At 258 to 266 the chain is on the extracellular side; that stretch reads NLGCLLACR. Residues 267–287 traverse the membrane as a helical segment; it reads FLCGVWSSSGLCLVGGSIADM. At 288–297 the chain is on the cytoplasmic side; it reads FPSETRGKAI. A helical membrane pass occupies residues 298-318; sequence AFFAFAPYVGPVVGPLVNGFI. At 319-326 the chain is on the extracellular side; the sequence is SVSTGRMD. Residues 327 to 347 form a helical membrane-spanning segment; that stretch reads LIFWVNMAFAGVMWIISSAIP. Topologically, residues 348 to 407 are cytoplasmic; the sequence is ETYAPVILKRKAARLRKETGNPKIMTEQEAQGVSMSEMMRACLLRPLYFAVTEPVLVATC. The chain crosses the membrane as a helical span at residues 408–428; it reads FYVCLIYSLLYAFFFAFPVIF. Residues 429 to 437 are Extracellular-facing; it reads GELYGYKDN. A helical transmembrane segment spans residues 438–458; that stretch reads LVGLMFIPIVIGALWALATTF. At 459–478 the chain is on the cytoplasmic side; that stretch reads YCENKYLQIVKQRKPTPEDR. Residues 479–499 form a helical membrane-spanning segment; the sequence is LLGAKIGAPFAAIALWILGAT. Topologically, residues 500-503 are extracellular; that stretch reads AYKH. The chain crosses the membrane as a helical span at residues 504-524; it reads IIWVGPASAGLAFGFGMVLIY. At 525–541 the chain is on the cytoplasmic side; that stretch reads YSLNNYIIDCYVQYASS. A helical membrane pass occupies residues 542–562; it reads ALATKVFLRSAGGAAFPLFTI. Over 563–574 the chain is Extracellular; the sequence is QMYHKLNLHWGS. A helical membrane pass occupies residues 575 to 595; sequence WLLAFISTAMIALPFAFSYWG. At 596–614 the chain is on the cytoplasmic side; the sequence is KGLRHKLSKKDYSIDSVEM.

It belongs to the major facilitator superfamily. DHA1 family. Polyamines/proton antiporter (TC 2.A.1.2.16) subfamily.

The protein localises to the cell membrane. Its function is as follows. Cell membrane polyamine/proton antiporter, involved in the detoxification of excess polyamines in the cytoplasm. Recognizes spermine, but not spermidine. This chain is Polyamine transporter 2 (TPO2), found in Saccharomyces cerevisiae (strain ATCC 204508 / S288c) (Baker's yeast).